The chain runs to 690 residues: Heterogeneous nuclear ribonucleoprotein M (690 aa).

Low complexity predominate over residues 1–13 (MAAGVEAAAEVAA). The interval 1-63 (MAAGVEAAAE…KRGGNRFEPY (63 aa)) is disordered. Ala-2 is modified (N-acetylalanine). Lys-17 is covalently cross-linked (Glycyl lysine isopeptide (Lys-Gly) (interchain with G-Cter in SUMO2)). Ser-29 carries the post-translational modification Phosphoserine. Glycyl lysine isopeptide (Lys-Gly) (interchain with G-Cter in SUMO2) cross-links involve residues Lys-37, Lys-68, and Lys-82. Basic and acidic residues predominate over residues 37-49 (KGEERPTQNEKRK). RRM domains follow at residues 70–148 (YRAF…EDPD) and 164–241 (STVF…MDER). Residue Ser-85 is modified to Phosphoserine. Glycyl lysine isopeptide (Lys-Gly) (interchain with G-Cter in SUMO2) cross-links involve residues Lys-87 and Lys-126. The residue at position 133 (Lys-133) is an N6-acetyllysine; alternate. Residue Lys-133 forms a Glycyl lysine isopeptide (Lys-Gly) (interchain with G-Cter in SUMO2); alternate linkage. Glycyl lysine isopeptide (Lys-Gly) (interchain with G-Cter in SUMO2) cross-links involve residues Lys-142 and Lys-144. Ser-164 carries the post-translational modification Phosphoserine. Lys-181 participates in a covalent cross-link: Glycyl lysine isopeptide (Lys-Gly) (interchain with G-Cter in SUMO2). Lys-237 is modified (N6-acetyllysine; alternate). Residue Lys-237 forms a Glycyl lysine isopeptide (Lys-Gly) (interchain with G-Cter in SUMO2); alternate linkage. Glycyl lysine isopeptide (Lys-Gly) (interchain with G-Cter in SUMO2) cross-links involve residues Lys-245 and Lys-305. Residues Ser-325 and Ser-337 each carry the phosphoserine modification. Residues Lys-341 and Lys-348 each participate in a glycyl lysine isopeptide (Lys-Gly) (interchain with G-Cter in SUMO2) cross-link. At Ser-357 the chain carries Phosphoserine. A run of 4 repeats spans residues 360–365 (GIERMG), 367–372 (GIDRIS), 375–380 (GMERMG), and 386–391 (GMDRVG). Residues 360–568 (GIERMGPGID…ALGAGIERMG (209 aa)) form a 27 X 6 AA repeats of [GEVSTPAN]-[ILMV]-[DE]-[RH]-[MLVI]-[GAV] region. The residue at position 392 (Ser-392) is a Phosphoserine. Tandem repeats lie at residues 393–398 (EIERMG), 400–405 (VMDRMG), and 406–411 (SVERMG). Ser-412 carries the phosphoserine modification. Repeat copies occupy residues 413 to 418 (GIERMG), 421 to 426 (GLDHMA), 428 to 433 (SIERMG), and 435 to 440 (TMERIG). A Phosphoserine modification is found at Ser-428. The residue at position 441 (Ser-441) is a Phosphoserine. 16 tandem repeats follow at residues 442–447 (GVERMG), 453–458 (GLERMA), 460–465 (PIDRVG), 467–472 (TIERMG), 474–479 (GVERMG), 481–486 (AIERMG), 488–493 (SMDRMV), 500–505 (GLERMG), 507–512 (VMDRMA), 514–519 (GLERMG), 522–527 (NLERMG), 528–532 (LERMG), 535–540 (SLERMG), 541–545 (LERMG), 548–553 (SLERMG), and 563–568 (GIERMG). Arg-456 carries the post-translational modification Omega-N-methylarginine. Ser-488 carries the post-translational modification Phosphoserine. Position 535 is a phosphoserine (Ser-535). Phosphoserine is present on Ser-548. 3 positions are modified to phosphoserine: Ser-578, Ser-593, and Ser-597. Residue Lys-611 forms a Glycyl lysine isopeptide (Lys-Gly) (interchain with G-Cter in SUMO2) linkage. The region spanning 613 to 689 (CQIFVRNLPF…REIDVRIDRN (77 aa)) is the RRM 3 domain. The residue at position 625 (Thr-625) is a Phosphothreonine. A Glycyl lysine isopeptide (Lys-Gly) (interchain with G-Cter in SUMO2) cross-link involves residue Lys-627. N6-acetyllysine is present on Lys-632. Residues Lys-645 and Lys-652 each participate in a glycyl lysine isopeptide (Lys-Gly) (interchain with G-Cter in SUMO2) cross-link. Lys-658 is modified (N6-acetyllysine; alternate). Lys-658 participates in a covalent cross-link: Glycyl lysine isopeptide (Lys-Gly) (interchain with G-Cter in SUMO2); alternate. Lys-658 participates in a covalent cross-link: Glycyl lysine isopeptide (Lys-Gly) (interchain with G-Cter in SUMO1); alternate. Ser-661 carries the phosphoserine modification. Lys-676 is covalently cross-linked (Glycyl lysine isopeptide (Lys-Gly) (interchain with G-Cter in SUMO2)).

Identified in the spliceosome C complex. Interacts with PPIA/CYPA. Sumoylated. Expressed in all tissues tested, including liver, heart, lung, skeletal muscle, kidney, stomach, large intestine, small intestine, pancreas, spleen, peritoneal macrophage and thyroid.

The protein resides in the nucleus matrix. Pre-mRNA binding protein, binds avidly to poly(G) and poly(U) RNA homopolymers. Involved in splicing. Acts as a receptor for carcinoembryonic antigen in Kupffer cells, may initiate a series of signaling events leading to tyrosine phosphorylation of proteins and induction of IL-1 alpha, IL-6, IL-10 and tumor necrosis factor alpha cytokines. This is Heterogeneous nuclear ribonucleoprotein M (Hnrnpm) from Rattus norvegicus (Rat).